Reading from the N-terminus, the 375-residue chain is 5-amino-6-(D-ribitylamino)uracil--L-tyrosine 4-hydroxyphenyl transferase 1 (375 aa).

The 235-residue stretch at 50–284 (VTYVVNRNIN…AVSRILFHGH (235 aa)) folds into the Radical SAM core domain. Residues Cys-64, Cys-68, and Cys-71 each coordinate [4Fe-4S] cluster.

The protein belongs to the radical SAM superfamily. CofH family. In terms of assembly, consists of two subunits, CofG and CofH. The cofactor is [4Fe-4S] cluster.

The enzyme catalyses 5-amino-6-(D-ribitylamino)uracil + L-tyrosine + S-adenosyl-L-methionine = 5-amino-5-(4-hydroxybenzyl)-6-(D-ribitylimino)-5,6-dihydrouracil + 2-iminoacetate + 5'-deoxyadenosine + L-methionine + H(+). It participates in cofactor biosynthesis; coenzyme F0 biosynthesis. Its function is as follows. Catalyzes the radical-mediated synthesis of 5-amino-5-(4-hydroxybenzyl)-6-(D-ribitylimino)-5,6-dihydrouracil from 5-amino-6-(D-ribitylamino)uracil and L-tyrosine. The polypeptide is 5-amino-6-(D-ribitylamino)uracil--L-tyrosine 4-hydroxyphenyl transferase 1 (Methanosarcina acetivorans (strain ATCC 35395 / DSM 2834 / JCM 12185 / C2A)).